Reading from the N-terminus, the 137-residue chain is Large-conductance mechanosensitive channel (137 aa).

Helical transmembrane passes span 9 to 29 (AFAV…GAAF) and 79 to 99 (IQSV…VKAI).

It belongs to the MscL family. Homopentamer.

It localises to the cell inner membrane. Functionally, channel that opens in response to stretch forces in the membrane lipid bilayer. May participate in the regulation of osmotic pressure changes within the cell. The protein is Large-conductance mechanosensitive channel of Pseudomonas fluorescens (strain Pf0-1).